The following is a 342-amino-acid chain: Polycomb group RING finger protein 2 (342 aa).

The RING-type zinc-finger motif lies at 18 to 57 (CALCGGYFIDATTIVECLHSFCKTCIVRYLETNKYCPMCD). Glycyl lysine isopeptide (Lys-Gly) (interchain with G-Cter in SUMO2) cross-links involve residues Lys51 and Lys88. The Nuclear localization signal signature appears at 81 to 95 (KLVPGLFKDEMKRRR). At Thr237 the chain carries Phosphothreonine; by PKA. The interval 237-342 (TLPTVPTPSE…MTVNGAPCPP (106 aa)) is disordered. Positions 243-253 (TPSEGTNTSGA) are enriched in polar residues. Positions 263–318 (APSPATLPATSSSLPSPATPSHGSPSSHGPPATHPTSPTPPSTAAGTTTATNGGTS) are enriched in low complexity. Residues 319 to 328 (NCLQTPSSTS) show a composition bias toward polar residues. Position 334 is a phosphothreonine; by PKA (Thr334).

As to quaternary structure, exists as both a monomer and homodimer. Component of a PRC1-like complex. Interacts with CBX8, RING1 and RNF2. Interacts with CBX7. Interacts with PHC2. Phosphorylated. Homodimer formation is regulated by phosphorylation with only unphosphorylated proteins forming homodimers. As to expression, expressed in embryonic stem cells. Expressed in a variety of tumor cells and in neural tissues.

The protein localises to the nucleus. In terms of biological role, transcriptional repressor. Binds specifically to the DNA sequence 5'-GACTNGACT-3'. Has tumor suppressor activity. May play a role in control of cell proliferation and/or neural cell development. Regulates proliferation of early T progenitor cells by maintaining expression of HES1. Also plays a role in antero-posterior specification of the axial skeleton and negative regulation of the self-renewal activity of hematopoietic stem cells. Component of a Polycomb group (PcG) multiprotein PRC1-like complex, a complex class required to maintain the transcriptionally repressive state of many genes, including Hox genes, throughout development. PcG PRC1 complex acts via chromatin remodeling and modification of histones; it mediates monoubiquitination of histone H2A 'Lys-119', rendering chromatin heritably changed in its expressibility. Within the PRC1-like complex, regulates RNF2 ubiquitin ligase activity. The chain is Polycomb group RING finger protein 2 (Pcgf2) from Mus musculus (Mouse).